Consider the following 483-residue polypeptide: Cyclic AMP-dependent transcription factor ATF-7 (483 aa).

The interval 1–285 (MGDDRPFVCN…GMVVGSASTM (285 aa)) is transactivation domain. A C2H2-type zinc finger spans residues 7–31 (FVCNAPGCGQRFTNEDHLAVHKHKH). T51 is subject to Phosphothreonine; by MAPK11. 2 positions are modified to phosphothreonine: T53 and T101. Residue K107 forms a Glycyl lysine isopeptide (Lys-Gly) (interchain with G-Cter in SUMO1) linkage. Disordered stretches follow at residues 110-148 (EPVE…TPTP) and 299-345 (HPDA…NRAA). 2 stretches are compositionally biased toward low complexity: residues 114 to 126 (VDSS…ASSP) and 307 to 320 (QPQV…PSTG). A compositionally biased stretch (basic and acidic residues) spans 326–343 (TVDEDPDERRQRFLERNR). Residues 332-395 (DERRQRFLER…AQLKQLLLAH (64 aa)) enclose the bZIP domain. The segment at 334–354 (RRQRFLERNRAAASRCRQKRK) is basic motif. A leucine-zipper region spans residues 360-388 (LEKKAEELTSQNIQLSNEVTLLRNEVAQL). 2 disordered regions span residues 407-440 (TQGY…SNGL) and 464-483 (LSMP…SAGR). Residues S413 and S423 each carry the phosphoserine modification. Over residues 429–440 (QHSSATAPSNGL) the composition is skewed to polar residues.

It belongs to the bZIP family. As to quaternary structure, homodimer; binds DNA as homodimer. Heterodimer; heterodimerizes with other members of ATF family and with JUN family members. Interacts with JNK2; the interaction does not phosphorylate ATF7 but acts as a docking site for other ATF-associated partners such as JUN family members. Interacts (via its transactivation domain) with TAF12 (isoforms TAFII15 and TAFII20); the interaction potentiates the transactivation activity (isoform TAFII20 only) and is inhibited by ATF7 sumoylation. Interacts with TAF4; the interaction inhibits the TAF12-dependent transactivation. Interacts with MAPK9; the interaction does not phosphorylate ATF7 but acts as a docking site for ATF7-associated partners such as JUN. Interacts with Ku complex components XRCC6 and XRCC7. Interacts with TERT. Post-translationally, on EGF stimulation, phosphorylated first on Thr-53 allowing subsequent phosphorylation on Thr-51. This latter phosphorylation prevents sumoylation, increases binding to TAF12 and enhances transcriptional activity. Social isolation stress as well as TNF-alpha also induce the phosphorylation of ATF7. Phosphorylated in proliferating colonic and small intestinal epithelial cells. In terms of processing, sumoylation delays nuclear localization and inhibits transactivation activity through preventing binding to TAF12. RANBP2 appears to be the specific E3 ligase.

It localises to the nucleus. The protein localises to the nucleoplasm. It is found in the chromosome. Its subcellular location is the telomere. Its function is as follows. Stress-responsive chromatin regulator that plays a role in various biological processes including innate immunological memory, adipocyte differentiation or telomerase regulation. In absence of stress, contributes to the formation of heterochromatin and heterochromatin-like structure by recruiting histone H3K9 tri- and di-methyltransferases thus silencing the transcription of target genes such as STAT1 in adipocytes, or genes involved in innate immunity in macrophages and adipocytes. Stress induces ATF7 phosphorylation that disrupts interactions with histone methyltransferase and enhances the association with coactivators containing histone acetyltransferase and/or histone demethylase, leading to disruption of the heterochromatin-like structure and subsequently transcriptional activation. In response to TNF-alpha, which is induced by various stresses, phosphorylated ATF7 and telomerase are released from telomeres leading to telomere shortening. Plays also a role in maintaining epithelial regenerative capacity and protecting against cell death during intestinal epithelial damage and repair. In Pongo abelii (Sumatran orangutan), this protein is Cyclic AMP-dependent transcription factor ATF-7 (ATF7).